The primary structure comprises 55 residues: Large ribosomal subunit protein bL33 (55 aa).

Belongs to the bacterial ribosomal protein bL33 family.

The chain is Large ribosomal subunit protein bL33 from Sodalis glossinidius (strain morsitans).